The sequence spans 344 residues: MQLLCWWQVLLWVLGLPAHGLEVAEDSGHPWREERPVPALQVGAVYLHEEEVAQDHRDQARAAEPMEASLGPRGDPMVVLSVVPGAAEDQRSPEAHDGTCSAQGEEDPSCGRENLFGLQGAGGFQDREEEYYAEPGVTEAEPVATEDANSTDSLKSPKVNCEERNVTGLENFTLKILNMSQDLMDFLNPNGSDCTLVLFYTPWCRFSASLAPHFNSLPRAFPTLGFLALDASQHSSLSTRFGTVAVPNILLFQGAKPMARFNHTDRTLETLKIFIFNQTGIEAKKNVVVTQADQMGPLPSTLIKTVDWLLVFSLFFLISFIMYATIRTESIRWLIPGQEQEHAE.

The N-terminal stretch at 1 to 20 (MQLLCWWQVLLWVLGLPAHG) is a signal peptide. Residues 21–305 (LEVAEDSGHP…GPLPSTLIKT (285 aa)) are Extracellular-facing. Disordered regions lie at residues 55 to 119 (DHRD…FGLQ) and 136 to 156 (GVTE…SLKS). Residues 88-97 (EDQRSPEAHD) show a composition bias toward basic and acidic residues. Residues 163 to 280 (ERNVTGLENF…LKIFIFNQTG (118 aa)) form the Thioredoxin domain. 4 N-linked (GlcNAc...) asparagine glycosylation sites follow: Asn171, Asn178, Asn190, and Asn277. The helical transmembrane segment at 306–326 (VDWLLVFSLFFLISFIMYATI) threads the bilayer. The Cytoplasmic portion of the chain corresponds to 327–344 (RTESIRWLIPGQEQEHAE).

It is found in the cell projection. It localises to the cilium membrane. Acts as a positive regulator of ciliary hedgehog signaling. Required for cilia biogenesis. This is Thioredoxin domain-containing protein 15 (Txndc15) from Mus musculus (Mouse).